The primary structure comprises 526 residues: Peptide chain release factor 3 (526 aa).

The tr-type G domain maps to 8–277 (NKRRTFAIIS…GLTEWAPKPQ (270 aa)). Residues 17 to 24 (SHPDAGKT), 85 to 89 (DTPGH), and 139 to 142 (NKLD) contribute to the GTP site.

It belongs to the TRAFAC class translation factor GTPase superfamily. Classic translation factor GTPase family. PrfC subfamily.

The protein resides in the cytoplasm. Its function is as follows. Increases the formation of ribosomal termination complexes and stimulates activities of RF-1 and RF-2. It binds guanine nucleotides and has strong preference for UGA stop codons. It may interact directly with the ribosome. The stimulation of RF-1 and RF-2 is significantly reduced by GTP and GDP, but not by GMP. The protein is Peptide chain release factor 3 of Actinobacillus pleuropneumoniae serotype 7 (strain AP76).